The primary structure comprises 457 residues: MSEAKKGHVLFFPYPLQGHINPMIQLAKRLSKKGITSTLIIASKDHREPYTSDDYSITVHTIHDGFFPHEHPHAKFVDLDRFHNSTSRSLTDFISSAKLSDNPPKALIYDPFMPFALDIAKDLDLYVVAYFTQPWLASLVYYHINEGTYDVPVDRHENPTLASFPGFPLLSQDDLPSFACEKGSYPLLHEFVVRQFSNLLQADCILCNTFDQLEPKVVKWMNDQWPVKNIGPVVPSKFLDNRLPEDKDYELENSKTEPDESVLKWLGNRPAKSVVYVAFGTLVALSEKQMKEIAMAISQTGYHFLWSVRESERSKLPSGFIEEAEEKDSGLVAKWVPQLEVLAHESIGCFVSHCGWNSTLEALCLGVPMVGVPQWTDQPTNAKFIEDVWKIGVRVRTDGEGLSSKEEIARCIVEVMEGERGKEIRKNVEKLKVLAREAISEGGSSDKKIDEFVALLT.

UDP-alpha-D-glucose contacts are provided by residues T281, 336–338 (VPQ), 353–361 (HCGWNSTLE), and 375–378 (WTDQ).

Belongs to the UDP-glycosyltransferase family.

The polypeptide is UDP-glycosyltransferase 74C1 (UGT74C1) (Arabidopsis thaliana (Mouse-ear cress)).